We begin with the raw amino-acid sequence, 806 residues long: Integrin beta-7 (806 aa).

The signal sequence occupies residues 1–19 (MVDSSTVLIFLLVLGGGQS). Residues 20-724 (ELDTKITSSG…PQEKGVDHTR (705 aa)) lie on the Extracellular side of the membrane. The PSI domain maps to 44–92 (SCQPVPSCQKCILSHPSCAWCKQLNFTASGEAEARRCARREELLARGCP). 26 disulfides stabilise this stretch: cysteine 51–cysteine 476, cysteine 54–cysteine 80, cysteine 64–cysteine 91, cysteine 216–cysteine 223, cysteine 271–cysteine 311, cysteine 412–cysteine 428, cysteine 448–cysteine 474, cysteine 478–cysteine 497, cysteine 488–cysteine 500, cysteine 502–cysteine 511, cysteine 513–cysteine 545, cysteine 527–cysteine 543, cysteine 537–cysteine 548, cysteine 550–cysteine 559, cysteine 561–cysteine 582, cysteine 566–cysteine 580, cysteine 574–cysteine 585, cysteine 587–cysteine 596, cysteine 598–cysteine 621, cysteine 605–cysteine 619, cysteine 613–cysteine 624, cysteine 626–cysteine 635, cysteine 638–cysteine 641, cysteine 645–cysteine 688, cysteine 651–cysteine 670, and cysteine 654–cysteine 666. Asparagine 68 carries an N-linked (GlcNAc...) asparagine glycan. The segment covering 98–107 (EPRGRQEVLQ) has biased composition (basic and acidic residues). Positions 98–123 (EPRGRQEVLQDKPLSQGDRGEGATQL) are disordered. The 240-residue stretch at 150–389 (YPVDLYYLMD…QLIMDAYDSL (240 aa)) folds into the VWFA domain. Mg(2+) is bound by residues serine 161 and serine 163. The Ca(2+) site is built by serine 163, aspartate 166, aspartate 167, and aspartate 198. A glycan (N-linked (GlcNAc...) asparagine) is linked at asparagine 250. Asparagine 254, aspartate 256, proline 258, and glutamate 259 together coordinate Ca(2+). Glutamate 259 contributes to the Mg(2+) binding site. Asparagine 279 carries N-linked (GlcNAc...) asparagine glycosylation. Ca(2+)-binding residues include aspartate 289 and glutamate 373. Asparagine 434 is a glycosylation site (N-linked (GlcNAc...) asparagine). I-EGF domains are found at residues 478–512 (CGDA…QLCE), 513–560 (CSEA…RLCE), 561–597 (CDDA…RACE), and 598–636 (CSKS…ALCD). N-linked (GlcNAc...) asparagine glycosylation occurs at asparagine 531. Asparagine 590 carries N-linked (GlcNAc...) asparagine glycosylation. Residues asparagine 665 and asparagine 674 are each glycosylated (N-linked (GlcNAc...) asparagine). The chain crosses the membrane as a helical span at residues 725-745 (AIILGCTGGIVAVGLGLVLAY). The Cytoplasmic portion of the chain corresponds to 746 to 806 (RLSVEIYDRR…PSLSLTREAD (61 aa)). Residues 786-806 (NPRFQGTNGRSPSLSLTREAD) are disordered.

This sequence belongs to the integrin beta chain family. Heterodimer of an alpha and a beta subunit. ITGB7/beta-7 associates with either ITGA4/alpha-4 or ITGAE/alpha-E. Integrin ITGA4/ITGB7 interacts with MADCAM1. Integrin ITGA4/ITGB7 interacts with VCAM1 and fibronectin. Interacts with FLNA (via filamin repeats 4, 9, 12, 17, 19, 21, and 23).

It is found in the cell membrane. Integrin ITGA4/ITGB7 (alpha-4/beta-7) (Peyer patches-specific homing receptor LPAM-1) is an adhesion molecule that mediates lymphocyte migration and homing to gut-associated lymphoid tissue (GALT). Integrin ITGA4/ITGB7 interacts with the cell surface adhesion molecules MADCAM1 which is normally expressed by the vascular endothelium of the gastrointestinal tract. Also interacts with VCAM1 and fibronectin, an extracellular matrix component. It recognizes one or more domains within the alternatively spliced CS-1 region of fibronectin. Interactions involve the tripeptide L-D-T in MADCAM1, and L-D-V in fibronectin. Integrin ITGAE/ITGB7 (alpha-E/beta-7, HML-1) is a receptor for E-cadherin. The protein is Integrin beta-7 (Itgb7) of Mus musculus (Mouse).